Consider the following 412-residue polypeptide: Multifunctional CCA protein (412 aa).

Gly-8 and Arg-11 together coordinate ATP. CTP-binding residues include Gly-8 and Arg-11. The Mg(2+) site is built by Asp-21 and Asp-23. Residues Arg-91, Arg-137, and Arg-140 each contribute to the ATP site. Residues Arg-91, Arg-137, and Arg-140 each coordinate CTP. The region spanning 225–326 (TGIHVMMVID…ADMLQATDAY (102 aa)) is the HD domain.

This sequence belongs to the tRNA nucleotidyltransferase/poly(A) polymerase family. Bacterial CCA-adding enzyme type 1 subfamily. As to quaternary structure, monomer. Can also form homodimers and oligomers. It depends on Mg(2+) as a cofactor. Requires Ni(2+) as cofactor.

The enzyme catalyses a tRNA precursor + 2 CTP + ATP = a tRNA with a 3' CCA end + 3 diphosphate. It catalyses the reaction a tRNA with a 3' CCA end + 2 CTP + ATP = a tRNA with a 3' CCACCA end + 3 diphosphate. Its function is as follows. Catalyzes the addition and repair of the essential 3'-terminal CCA sequence in tRNAs without using a nucleic acid template. Adds these three nucleotides in the order of C, C, and A to the tRNA nucleotide-73, using CTP and ATP as substrates and producing inorganic pyrophosphate. tRNA 3'-terminal CCA addition is required both for tRNA processing and repair. Also involved in tRNA surveillance by mediating tandem CCA addition to generate a CCACCA at the 3' terminus of unstable tRNAs. While stable tRNAs receive only 3'-terminal CCA, unstable tRNAs are marked with CCACCA and rapidly degraded. The chain is Multifunctional CCA protein from Nitrosomonas eutropha (strain DSM 101675 / C91 / Nm57).